We begin with the raw amino-acid sequence, 335 residues long: MERIIEIEKMELEEAEEVSLRPSGWDDYIGQEKIKRNLGVFIEAAKRRGEGLDHILFFGPPGLGKTTLAHIISHEMGANIKVTTAPMIEKAGDLAAILTNLSEGDILFIDEIHRLSASIEEILYPAMEDFRLDIIIGSGPAAQTVKIDLPRFTLIGATTRAGMISKPLRERFGMNFWMQFYNIEELSQIITLASIKLKKRCLLESAKEIARRSRGTPRVALRLLRRVRDFAEVANEEEIKIEQARYALHELGVNDHGFDDLDLRYLRILVQSKGRPVGLGTIAAAMSEDEGTIEDVVEPYLLAHGYLERTARGRVATRQTYELFSLPFEPNATLF.

The large ATPase domain (RuvB-L) stretch occupies residues 1 to 181 (MERIIEIEKM…FGMNFWMQFY (181 aa)). ATP contacts are provided by residues Leu20, Arg21, Gly62, Lys65, Thr66, Thr67, 128–130 (EDF), Arg171, Tyr181, and Arg218. Thr66 lines the Mg(2+) pocket. Positions 182–252 (NIEELSQIIT…QARYALHELG (71 aa)) are small ATPAse domain (RuvB-S). The head domain (RuvB-H) stretch occupies residues 255-335 (DHGFDDLDLR…LPFEPNATLF (81 aa)). Residues Arg309 and Arg314 each coordinate DNA.

It belongs to the RuvB family. Homohexamer. Forms an RuvA(8)-RuvB(12)-Holliday junction (HJ) complex. HJ DNA is sandwiched between 2 RuvA tetramers; dsDNA enters through RuvA and exits via RuvB. An RuvB hexamer assembles on each DNA strand where it exits the tetramer. Each RuvB hexamer is contacted by two RuvA subunits (via domain III) on 2 adjacent RuvB subunits; this complex drives branch migration. In the full resolvosome a probable DNA-RuvA(4)-RuvB(12)-RuvC(2) complex forms which resolves the HJ.

The protein localises to the cytoplasm. The enzyme catalyses ATP + H2O = ADP + phosphate + H(+). Functionally, the RuvA-RuvB-RuvC complex processes Holliday junction (HJ) DNA during genetic recombination and DNA repair, while the RuvA-RuvB complex plays an important role in the rescue of blocked DNA replication forks via replication fork reversal (RFR). RuvA specifically binds to HJ cruciform DNA, conferring on it an open structure. The RuvB hexamer acts as an ATP-dependent pump, pulling dsDNA into and through the RuvAB complex. RuvB forms 2 homohexamers on either side of HJ DNA bound by 1 or 2 RuvA tetramers; 4 subunits per hexamer contact DNA at a time. Coordinated motions by a converter formed by DNA-disengaged RuvB subunits stimulates ATP hydrolysis and nucleotide exchange. Immobilization of the converter enables RuvB to convert the ATP-contained energy into a lever motion, pulling 2 nucleotides of DNA out of the RuvA tetramer per ATP hydrolyzed, thus driving DNA branch migration. The RuvB motors rotate together with the DNA substrate, which together with the progressing nucleotide cycle form the mechanistic basis for DNA recombination by continuous HJ branch migration. Branch migration allows RuvC to scan DNA until it finds its consensus sequence, where it cleaves and resolves cruciform DNA. The chain is Holliday junction branch migration complex subunit RuvB from Wolinella succinogenes (strain ATCC 29543 / DSM 1740 / CCUG 13145 / JCM 31913 / LMG 7466 / NCTC 11488 / FDC 602W) (Vibrio succinogenes).